A 241-amino-acid polypeptide reads, in one-letter code: Small ribosomal subunit protein uS3 (241 aa).

The KH type-2 domain maps to 39 to 108 (IREGVLKLLK…NLKVEVKVIE (70 aa)). Residues 215–241 (SQRVSEKAPMNNDRRFNNKNNNRGGRK) form a disordered region. Residues 232–241 (NKNNNRGGRK) show a composition bias toward low complexity.

Belongs to the universal ribosomal protein uS3 family. Part of the 30S ribosomal subunit. Forms a tight complex with proteins S10 and S14.

In terms of biological role, binds the lower part of the 30S subunit head. Binds mRNA in the 70S ribosome, positioning it for translation. The sequence is that of Small ribosomal subunit protein uS3 from Mesoplasma florum (Acholeplasma florum).